Reading from the N-terminus, the 217-residue chain is uncharacterized protein (217 aa).

Residues 14-217 (LAVNNLCIER…NELATEIISL (204 aa)) enclose the ABC transporter domain. 46–53 (GEIGSGKT) is an ATP binding site.

It belongs to the ABC transporter superfamily.

This is an uncharacterized protein from Haemophilus influenzae (strain ATCC 51907 / DSM 11121 / KW20 / Rd).